The following is an 879-amino-acid chain: Protein translocase subunit SecA (879 aa).

Residues Q86, 104–108 (GEGKT), and D500 each bind ATP. 4 residues coordinate Zn(2+): C863, C865, C874, and H875.

This sequence belongs to the SecA family. In terms of assembly, monomer and homodimer. Part of the essential Sec protein translocation apparatus which comprises SecA, SecYEG and auxiliary proteins SecDF-YajC and YidC. Requires Zn(2+) as cofactor.

The protein localises to the cell inner membrane. It localises to the cytoplasm. It catalyses the reaction ATP + H2O + cellular proteinSide 1 = ADP + phosphate + cellular proteinSide 2.. Its function is as follows. Part of the Sec protein translocase complex. Interacts with the SecYEG preprotein conducting channel. Has a central role in coupling the hydrolysis of ATP to the transfer of proteins into and across the cell membrane, serving both as a receptor for the preprotein-SecB complex and as an ATP-driven molecular motor driving the stepwise translocation of polypeptide chains across the membrane. This chain is Protein translocase subunit SecA, found in Orientia tsutsugamushi (strain Ikeda) (Rickettsia tsutsugamushi).